We begin with the raw amino-acid sequence, 25 residues long: Bioremediase (25 aa).

Positions 1–25 (DFPIANGERQSPVDIDTKAVVQDPA) constitute an Alpha-carbonic anhydrase domain. Positions 1–25 (DFPIANGERQSPVDIDTKAVVQDPA) are disordered.

This sequence belongs to the alpha-carbonic anhydrase family. Requires Zn(2+) as cofactor.

Functionally, releases silica from silica-rich substances. The sequence is that of Bioremediase from Thermoanaerobacter sp.